Consider the following 561-residue polypeptide: Inner membrane ABC transporter ATP-binding protein YddA (561 aa).

At M1–T3 the chain is on the cytoplasmic side. Residues I4–L24 form a helical membrane-spanning segment. The Periplasmic portion of the chain corresponds to R25 to S31. Residues V32–L52 traverse the membrane as a helical segment. Positions I35–E337 constitute an ABC transmembrane type-1 domain. Residues N53 to K70 lie on the Cytoplasmic side of the membrane. Residues L71–N91 form a helical membrane-spanning segment. Topologically, residues K92–T151 are periplasmic. Residues L152–L172 traverse the membrane as a helical segment. The Cytoplasmic portion of the chain corresponds to W173 to E187. The chain crosses the membrane as a helical span at residues W188–F208. Residues T209–S290 are Periplasmic-facing. The chain crosses the membrane as a helical span at residues V291–L311. Residues M312–L561 lie on the Cytoplasmic side of the membrane. Residues V367 to L561 form the ABC transporter domain. G400–T407 lines the ATP pocket.

It belongs to the ABC transporter superfamily.

The protein localises to the cell inner membrane. The polypeptide is Inner membrane ABC transporter ATP-binding protein YddA (yddA) (Escherichia coli (strain K12)).